The following is a 281-amino-acid chain: Aliphatic sulfonates import ATP-binding protein SsuB (281 aa).

The ABC transporter domain occupies 40 to 263 (LDIRGLRKSF…QRGSAELAAL (224 aa)). 72–79 (GRSGCGKS) provides a ligand contact to ATP.

The protein belongs to the ABC transporter superfamily. Aliphatic sulfonates importer (TC 3.A.1.17.2) family. The complex is composed of two ATP-binding proteins (SsuB), two transmembrane proteins (SsuC) and a solute-binding protein (SsuA).

It is found in the cell inner membrane. The catalysed reaction is ATP + H2O + aliphatic sulfonate-[sulfonate-binding protein]Side 1 = ADP + phosphate + aliphatic sulfonateSide 2 + [sulfonate-binding protein]Side 1.. In terms of biological role, part of the ABC transporter complex SsuABC involved in aliphatic sulfonates import. Responsible for energy coupling to the transport system. The protein is Aliphatic sulfonates import ATP-binding protein SsuB of Rhodopseudomonas palustris (strain ATCC BAA-98 / CGA009).